Here is a 351-residue protein sequence, read N- to C-terminus: Meiotically up-regulated gene 1 protein (351 aa).

Its subcellular location is the cytoplasm. In terms of biological role, required for correct meiotic chromosome segregation. The protein is Meiotically up-regulated gene 1 protein (mug1) of Schizosaccharomyces pombe (strain 972 / ATCC 24843) (Fission yeast).